Consider the following 656-residue polypeptide: Nuclear elongation and deformation protein 1 (656 aa).

Serine 99 and serine 103 each carry phosphoserine. A compositionally biased stretch (polar residues) spans 99-118 (SPIVSPTTSPKQTPSINVTE). Residues 99–121 (SPIVSPTTSPKQTPSINVTEPQD) are disordered. At threonine 106 the chain carries Phosphothreonine. Phosphoserine is present on residues serine 107, serine 159, and serine 286. 2 disordered regions span residues 282–328 (VYGH…VSES) and 587–656 (SDEE…ENAV). Residues 291-300 (PSRTPASPKS) show a composition bias toward low complexity. 3 positions are modified to phosphoserine: serine 318, serine 321, and serine 587. The span at 318-328 (SEQSLSPVSES) shows a compositional bias: polar residues. Over residues 596–609 (KSTSKSPKTPKNTK) the composition is skewed to low complexity. The segment covering 640 to 656 (FEGEEDEEGEEDVENAV) has biased composition (acidic residues).

Belongs to the lipin family. As to quaternary structure, interacts with dis3, pim1 and nup189.

In terms of biological role, may have a role in the maintenance of the nuclear envelope structure and in minichromosome stability. The protein is Nuclear elongation and deformation protein 1 (ned1) of Schizosaccharomyces pombe (strain 972 / ATCC 24843) (Fission yeast).